We begin with the raw amino-acid sequence, 156 residues long: 6,7-dimethyl-8-ribityllumazine synthase (156 aa).

Residues phenylalanine 22, 56-58 (ALE), and 80-82 (AVI) each bind 5-amino-6-(D-ribitylamino)uracil. (2S)-2-hydroxy-3-oxobutyl phosphate is bound at residue 85–86 (DT). Histidine 88 functions as the Proton donor in the catalytic mechanism. Phenylalanine 113 contacts 5-amino-6-(D-ribitylamino)uracil. Arginine 127 contributes to the (2S)-2-hydroxy-3-oxobutyl phosphate binding site.

This sequence belongs to the DMRL synthase family.

The catalysed reaction is (2S)-2-hydroxy-3-oxobutyl phosphate + 5-amino-6-(D-ribitylamino)uracil = 6,7-dimethyl-8-(1-D-ribityl)lumazine + phosphate + 2 H2O + H(+). It functions in the pathway cofactor biosynthesis; riboflavin biosynthesis; riboflavin from 2-hydroxy-3-oxobutyl phosphate and 5-amino-6-(D-ribitylamino)uracil: step 1/2. Catalyzes the formation of 6,7-dimethyl-8-ribityllumazine by condensation of 5-amino-6-(D-ribitylamino)uracil with 3,4-dihydroxy-2-butanone 4-phosphate. This is the penultimate step in the biosynthesis of riboflavin. The sequence is that of 6,7-dimethyl-8-ribityllumazine synthase from Leuconostoc mesenteroides subsp. mesenteroides (strain ATCC 8293 / DSM 20343 / BCRC 11652 / CCM 1803 / JCM 6124 / NCDO 523 / NBRC 100496 / NCIMB 8023 / NCTC 12954 / NRRL B-1118 / 37Y).